Reading from the N-terminus, the 313-residue chain is Foldase protein PrsA (313 aa).

A signal peptide spans 1–20 (MKKKLLAGAITLLSVATLAA). Residue Cys-21 is the site of N-palmitoyl cysteine attachment. Cys-21 carries S-diacylglycerol cysteine lipidation. The region spanning 143 to 241 (TPDVTAQIIR…SQYYIVKLTK (99 aa)) is the PpiC domain.

The protein belongs to the PrsA family.

The protein resides in the cell membrane. The catalysed reaction is [protein]-peptidylproline (omega=180) = [protein]-peptidylproline (omega=0). In terms of biological role, plays a major role in protein secretion by helping the post-translocational extracellular folding of several secreted proteins. This is Foldase protein PrsA from Streptococcus pneumoniae (strain ATCC BAA-255 / R6).